We begin with the raw amino-acid sequence, 365 residues long: Green-sensitive opsin P521 (365 aa).

The Extracellular portion of the chain corresponds to 1–51; that stretch reads MTEAWNVAVFAARRSRDDDDTTRGSVFTYTNTNNTRGPFEGPNYHIAPRWV. An N-linked (GlcNAc...) asparagine glycan is attached at Asn-33. Residues 52 to 76 form a helical membrane-spanning segment; the sequence is YNLVSFFMIIVVIASCFTNGLVLVA. The Cytoplasmic portion of the chain corresponds to 77–88; that stretch reads TAKFKKLRHPLN. A helical membrane pass occupies residues 89-113; it reads WILVNLAFVDLVETLVASTISVFNQ. The Extracellular segment spans residues 114-128; it reads IFGYFILGHPLCVIE. A disulfide bridge connects residues Cys-125 and Cys-202. A helical transmembrane segment spans residues 129–148; sequence GYVVSSCGITGLWSLAIISW. The Cytoplasmic portion of the chain corresponds to 149 to 167; that stretch reads ERWFVVCKPFGNIKFDSKL. The helical transmembrane segment at 168-191 threads the bilayer; it reads AIIGIVFSWVWAWGWSAPPIFGWS. Residues 192–217 are Extracellular-facing; the sequence is RYWPHGLKTSCGPDVFSGSVELGCQS. Residues 218 to 245 traverse the membrane as a helical segment; sequence FMLTLMITCCFLPLFIIIVCYLQVWMAI. The Cytoplasmic segment spans residues 246 to 267; it reads RAVAAQQKESESTQKAEREVSR. A helical transmembrane segment spans residues 268-291; sequence MVVVMIVAFCICWGPYASFVSFAA. Topologically, residues 292–299 are extracellular; sequence ANPGYAFH. Residues 300 to 324 traverse the membrane as a helical segment; that stretch reads PLAAALPAYFAKSATIYNPVIYVFM. Lys-311 is modified (N6-(retinylidene)lysine). The Cytoplasmic portion of the chain corresponds to 325-365; sequence NRQFRNCIMQLFGKKVDDGSEASTTSRTEVSSVSNSSVAPA. The interval 342-365 is disordered; it reads DGSEASTTSRTEVSSVSNSSVAPA. Positions 345-365 are enriched in low complexity; the sequence is EASTTSRTEVSSVSNSSVAPA.

The protein belongs to the G-protein coupled receptor 1 family. Opsin subfamily. Post-translationally, phosphorylated on some or all of the serine and threonine residues present in the C-terminal region. In terms of tissue distribution, in this lizard the color pigments are found in the rod-shaped photoreceptor cells which have been derived from ancestral cone-like photoreceptors.

It localises to the membrane. Functionally, visual pigments are the light-absorbing molecules that mediate vision. They consist of an apoprotein, opsin, covalently linked to cis-retinal. The chain is Green-sensitive opsin P521 from Gekko gecko (Tokay gecko).